Reading from the N-terminus, the 355-residue chain is Phosphate acyltransferase (355 aa).

This sequence belongs to the PlsX family. As to quaternary structure, homodimer. Probably interacts with PlsY.

The protein resides in the cytoplasm. It carries out the reaction a fatty acyl-[ACP] + phosphate = an acyl phosphate + holo-[ACP]. It participates in lipid metabolism; phospholipid metabolism. In terms of biological role, catalyzes the reversible formation of acyl-phosphate (acyl-PO(4)) from acyl-[acyl-carrier-protein] (acyl-ACP). This enzyme utilizes acyl-ACP as fatty acyl donor, but not acyl-CoA. The chain is Phosphate acyltransferase from Rhodospirillum centenum (strain ATCC 51521 / SW).